The primary structure comprises 181 residues: dTDP-4-dehydrorhamnose 3,5-epimerase (181 aa).

Residues Arg-23, Glu-28, 47–49, and Arg-59 each bind substrate; that span reads QDN. Residue His-62 is the Proton acceptor of the active site. Positions 72 and 119 each coordinate substrate. Tyr-132 (proton donor) is an active-site residue. Positions 143 and 167 each coordinate substrate.

This sequence belongs to the dTDP-4-dehydrorhamnose 3,5-epimerase family. Homodimer.

It catalyses the reaction dTDP-4-dehydro-6-deoxy-alpha-D-glucose = dTDP-4-dehydro-beta-L-rhamnose. The protein operates within carbohydrate biosynthesis; dTDP-L-rhamnose biosynthesis. It functions in the pathway bacterial outer membrane biogenesis; LPS O-antigen biosynthesis. Functionally, catalyzes the epimerization of the C3' and C5'positions of dTDP-6-deoxy-D-xylo-4-hexulose, forming dTDP-6-deoxy-L-lyxo-4-hexulose. This is dTDP-4-dehydrorhamnose 3,5-epimerase (rfbC) from Shigella flexneri.